The following is a 314-amino-acid chain: 4-hydroxy-3-methylbut-2-enyl diphosphate reductase (314 aa).

Cys-12 provides a ligand contact to [4Fe-4S] cluster. His-41 and His-74 together coordinate (2E)-4-hydroxy-3-methylbut-2-enyl diphosphate. 2 residues coordinate dimethylallyl diphosphate: His-41 and His-74. The isopentenyl diphosphate site is built by His-41 and His-74. Cys-96 serves as a coordination point for [4Fe-4S] cluster. His-124 contributes to the (2E)-4-hydroxy-3-methylbut-2-enyl diphosphate binding site. His-124 contributes to the dimethylallyl diphosphate binding site. His-124 contributes to the isopentenyl diphosphate binding site. The Proton donor role is filled by Glu-126. A (2E)-4-hydroxy-3-methylbut-2-enyl diphosphate-binding site is contributed by Thr-167. Position 197 (Cys-197) interacts with [4Fe-4S] cluster. 4 residues coordinate (2E)-4-hydroxy-3-methylbut-2-enyl diphosphate: Ser-225, Ser-226, Asn-227, and Ser-269. Residues Ser-225, Ser-226, Asn-227, and Ser-269 each coordinate dimethylallyl diphosphate. 4 residues coordinate isopentenyl diphosphate: Ser-225, Ser-226, Asn-227, and Ser-269.

It belongs to the IspH family. The cofactor is [4Fe-4S] cluster.

The catalysed reaction is isopentenyl diphosphate + 2 oxidized [2Fe-2S]-[ferredoxin] + H2O = (2E)-4-hydroxy-3-methylbut-2-enyl diphosphate + 2 reduced [2Fe-2S]-[ferredoxin] + 2 H(+). The enzyme catalyses dimethylallyl diphosphate + 2 oxidized [2Fe-2S]-[ferredoxin] + H2O = (2E)-4-hydroxy-3-methylbut-2-enyl diphosphate + 2 reduced [2Fe-2S]-[ferredoxin] + 2 H(+). Its pathway is isoprenoid biosynthesis; dimethylallyl diphosphate biosynthesis; dimethylallyl diphosphate from (2E)-4-hydroxy-3-methylbutenyl diphosphate: step 1/1. It functions in the pathway isoprenoid biosynthesis; isopentenyl diphosphate biosynthesis via DXP pathway; isopentenyl diphosphate from 1-deoxy-D-xylulose 5-phosphate: step 6/6. Functionally, catalyzes the conversion of 1-hydroxy-2-methyl-2-(E)-butenyl 4-diphosphate (HMBPP) into a mixture of isopentenyl diphosphate (IPP) and dimethylallyl diphosphate (DMAPP). Acts in the terminal step of the DOXP/MEP pathway for isoprenoid precursor biosynthesis. The protein is 4-hydroxy-3-methylbut-2-enyl diphosphate reductase of Haemophilus influenzae (strain PittEE).